Consider the following 253-residue polypeptide: uncharacterized protein (253 aa).

This is an uncharacterized protein from Mycoplasma pneumoniae (strain ATCC 29342 / M129 / Subtype 1) (Mycoplasmoides pneumoniae).